The following is a 162-amino-acid chain: Dihydrofolate reductase (162 aa).

Positions 3–161 (KITIIAACAE…VAYTFVHYLG (159 aa)) constitute a DHFR domain. Position 7–9 (7–9 (IAA)) interacts with substrate. Residues 8–9 (AA) and 16–21 (IGAGNA) contribute to the NADP(+) site. Aspartate 29 is a substrate binding site. 45–48 (GRKT) lines the NADP(+) pocket. Arginine 60 is a substrate binding site. Residues 65–68 (ISRQ) and 98–103 (MGGAQI) contribute to the NADP(+) site. Threonine 117 serves as a coordination point for substrate.

It belongs to the dihydrofolate reductase family.

The enzyme catalyses (6S)-5,6,7,8-tetrahydrofolate + NADP(+) = 7,8-dihydrofolate + NADPH + H(+). It functions in the pathway cofactor biosynthesis; tetrahydrofolate biosynthesis; 5,6,7,8-tetrahydrofolate from 7,8-dihydrofolate: step 1/1. Key enzyme in folate metabolism. Catalyzes an essential reaction for de novo glycine and purine synthesis, and for DNA precursor synthesis. In Neisseria gonorrhoeae, this protein is Dihydrofolate reductase (folA).